A 1101-amino-acid chain; its full sequence is Protein diaphanous homolog 2 (1101 aa).

Met-1 carries the post-translational modification N-acetylmethionine. The segment at 1-44 (MEQPGAAASGAGGGSEEPGGGRSNKRSAGNRAANEEETKNKPKL) is disordered. Over residues 10-22 (GAGGGSEEPGGGR) the composition is skewed to gly residues. In terms of domain architecture, GBD/FH3 spans 98 to 464 (SLNLSEKEVL…QIVLHCSGMD (367 aa)). Coiled coils occupy residues 366–418 (KEKE…MLKD) and 487–547 (KAKV…SSSG). Over residues 536–546 (RTQAQVLSSSS) the composition is skewed to polar residues. Disordered stretches follow at residues 536 to 594 (RTQA…PPPP), 1010 to 1048 (NKRREMEEKTRRAKLAKEKAEQEKLERQKKKKQLIDINK), and 1070 to 1101 (RDRRKRIPRNPDNRRVPLERSRSRHNGAISSK). Residues 549–594 (PGPPAAPPLPGVGPPPPPPAPPLPGGAPLPPPPPPLPGMMGIPPPP) are compositionally biased toward pro residues. The FH1 domain occupies 549-623 (PGPPAAPPLP…PPPGISLNLP (75 aa)). In terms of domain architecture, FH2 spans 628–1028 (QKKMYKPEVS…TRRAKLAKEK (401 aa)). A coiled-coil region spans residues 903–1053 (SASKVSAQIL…IDINKEGDET (151 aa)). Composition is skewed to basic and acidic residues over residues 1010–1035 (NKRREMEEKTRRAKLAKEKAEQEKLE) and 1078–1090 (RNPDNRRVPLERS). One can recognise a DAD domain in the interval 1051–1081 (DETGVMDNLLEALQSGAAFRDRRKRIPRNPD).

Belongs to the formin homology family. Diaphanous subfamily. As to quaternary structure, isoform 3 interacts with RHOD in the GTP-bound form. Expressed in testis, ovary, small intestine, prostate, lung, liver, kidney and leukocytes.

It is found in the cytoplasm. It localises to the cytosol. The protein localises to the early endosome. Its function is as follows. Could be involved in oogenesis. Involved in the regulation of endosome dynamics. Implicated in a novel signal transduction pathway, in which isoform 3 and CSK are sequentially activated by RHOD to regulate the motility of early endosomes through interactions with the actin cytoskeleton. This is Protein diaphanous homolog 2 (DIAPH2) from Homo sapiens (Human).